The following is a 476-amino-acid chain: Aspartyl/glutamyl-tRNA(Asn/Gln) amidotransferase subunit B (476 aa).

Belongs to the GatB/GatE family. GatB subfamily. As to quaternary structure, heterotrimer of A, B and C subunits.

The enzyme catalyses L-glutamyl-tRNA(Gln) + L-glutamine + ATP + H2O = L-glutaminyl-tRNA(Gln) + L-glutamate + ADP + phosphate + H(+). It carries out the reaction L-aspartyl-tRNA(Asn) + L-glutamine + ATP + H2O = L-asparaginyl-tRNA(Asn) + L-glutamate + ADP + phosphate + 2 H(+). Functionally, allows the formation of correctly charged Asn-tRNA(Asn) or Gln-tRNA(Gln) through the transamidation of misacylated Asp-tRNA(Asn) or Glu-tRNA(Gln) in organisms which lack either or both of asparaginyl-tRNA or glutaminyl-tRNA synthetases. The reaction takes place in the presence of glutamine and ATP through an activated phospho-Asp-tRNA(Asn) or phospho-Glu-tRNA(Gln). The protein is Aspartyl/glutamyl-tRNA(Asn/Gln) amidotransferase subunit B of Lactobacillus johnsonii (strain CNCM I-12250 / La1 / NCC 533).